The sequence spans 528 residues: G patch domain-containing protein 2 (528 aa).

The disordered stretch occupies residues 36-119 (LEESSEQARG…NKKDHSDSDD (84 aa)). The segment covering 63 to 77 (RQARKRRGRKRRSYN) has biased composition (basic residues). Positions 98–117 (EPSKDYRENHNNNKKDHSDS) are enriched in basic and acidic residues. A phosphoserine mark is found at serine 115, serine 117, serine 146, and serine 195. Disordered stretches follow at residues 232-282 (SEET…GDDE) and 487-528 (GRDG…GKSA). The span at 239-252 (NKDKMECEEQKVSD) shows a compositional bias: basic and acidic residues. The G-patch domain maps to 467 to 513 (ENNIGNRMLQNMGWTPGSGLGRDGKGISEPIQAMQRPKGLGLGFPLP). Over residues 514-528 (KSTSATTTPNAGKSA) the composition is skewed to polar residues.

In terms of assembly, interacts with DHX15. As to expression, testis.

Its subcellular location is the nucleus speckle. The protein localises to the nucleus. It is found in the nucleolus. Enhances the ATPase activity of DHX15 in vitro. This Homo sapiens (Human) protein is G patch domain-containing protein 2 (GPATCH2).